The chain runs to 233 residues: Adenosine 5'-phosphosulfate reductase (233 aa).

Residues cysteine 120, cysteine 121, cysteine 203, and cysteine 206 each coordinate [4Fe-4S] cluster. Cysteine 229 (nucleophile; cysteine thiosulfonate intermediate) is an active-site residue.

This sequence belongs to the PAPS reductase family. CysH subfamily. [4Fe-4S] cluster is required as a cofactor.

The protein resides in the cytoplasm. It carries out the reaction [thioredoxin]-disulfide + sulfite + AMP + 2 H(+) = adenosine 5'-phosphosulfate + [thioredoxin]-dithiol. It functions in the pathway sulfur metabolism; hydrogen sulfide biosynthesis; sulfite from sulfate. Functionally, catalyzes the formation of sulfite from adenosine 5'-phosphosulfate (APS) using thioredoxin as an electron donor. This Bacillus pumilus (strain SAFR-032) protein is Adenosine 5'-phosphosulfate reductase.